A 102-amino-acid chain; its full sequence is Acid shock protein (102 aa).

The signal sequence occupies residues 1-21; that stretch reads MKKVLALVVAAAMGLSSAAFA. The span at 22–41 shows a compositional bias: low complexity; sequence AETATTPAPTATTTKAAPAK. The propeptide occupies 22 to 58; it reads AETATTPAPTATTTKAAPAKTTHHKKQHKAAPAQKAQ. The disordered stretch occupies residues 22-102; it reads AETATTPAPT…PAKPAAQPAA (81 aa). Residues 80–90 show a composition bias toward basic residues; the sequence is AAKKHAKKHSH. Over residues 91-102 the composition is skewed to low complexity; that stretch reads QQPAKPAAQPAA.

The protein belongs to the Asr family. Proteolytic processing gives rise to the active protein.

It localises to the periplasm. Required for growth and/or survival at acidic conditions. The polypeptide is Acid shock protein (Escherichia coli O17:K52:H18 (strain UMN026 / ExPEC)).